The following is a 490-amino-acid chain: Betaine aldehyde dehydrogenase (490 aa).

Aspartate 93 is a binding site for K(+). 150-152 (GAW) contributes to the NAD(+) binding site. Residue lysine 162 is the Charge relay system of the active site. 176-179 (KPSE) lines the NAD(+) pocket. Valine 180 contributes to the K(+) binding site. 230–233 (GIAS) provides a ligand contact to NAD(+). A K(+)-binding site is contributed by leucine 246. The active-site Proton acceptor is glutamate 252. Residues glycine 254, cysteine 286, and glutamate 387 each contribute to the NAD(+) site. The Nucleophile role is filled by cysteine 286. The residue at position 286 (cysteine 286) is a Cysteine sulfenic acid (-SOH). K(+)-binding residues include lysine 457 and glycine 460. The active-site Charge relay system is the glutamate 464.

The protein belongs to the aldehyde dehydrogenase family. Dimer of dimers. It depends on K(+) as a cofactor.

The enzyme catalyses betaine aldehyde + NAD(+) + H2O = glycine betaine + NADH + 2 H(+). It participates in amine and polyamine biosynthesis; betaine biosynthesis via choline pathway; betaine from betaine aldehyde: step 1/1. Its function is as follows. Involved in the biosynthesis of the osmoprotectant glycine betaine. Catalyzes the irreversible oxidation of betaine aldehyde to the corresponding acid. This chain is Betaine aldehyde dehydrogenase, found in Yersinia pseudotuberculosis serotype IB (strain PB1/+).